Here is a 270-residue protein sequence, read N- to C-terminus: Bifunctional folate synthesis protein (270 aa).

The tract at residues 1 to 119 is DHNA; sequence MDQLQIKDLE…TCSVTIHRRK (119 aa). Substrate is bound by residues Glu21, Tyr53, and 72-73; that span reads IE. Lys99 functions as the Proton donor/acceptor; for DHNA activity in the catalytic mechanism. The segment at 120 to 270 is HPPK; it reads QRAFIALGSN…IRNLYDALKK (151 aa). ATP contacts are provided by residues 160 to 163, 171 to 173, 192 to 195, 200 to 215, 227 to 233, and 238 to 240; these read TEPW, FAN, LAIE, RVREVHWGPRLIDLDL, DLILPHP, and RLF. Asp212 and Asp214 together coordinate Mg(2+).

In the N-terminal section; belongs to the DHNA family. It in the C-terminal section; belongs to the HPPK family. In terms of assembly, homotrimer or homotetramer.

The catalysed reaction is 7,8-dihydroneopterin = 6-hydroxymethyl-7,8-dihydropterin + glycolaldehyde. The enzyme catalyses 6-hydroxymethyl-7,8-dihydropterin + ATP = (7,8-dihydropterin-6-yl)methyl diphosphate + AMP + H(+). Its pathway is cofactor biosynthesis; tetrahydrofolate biosynthesis; 2-amino-4-hydroxy-6-hydroxymethyl-7,8-dihydropteridine diphosphate from 7,8-dihydroneopterin triphosphate: step 3/4. The protein operates within cofactor biosynthesis; tetrahydrofolate biosynthesis; 2-amino-4-hydroxy-6-hydroxymethyl-7,8-dihydropteridine diphosphate from 7,8-dihydroneopterin triphosphate: step 4/4. Catalyzes two sequential steps of tetrahydrofolate biosynthesis, the conversion of 7,8-dihydroneopterin to 6-hydroxymethyl-7,8-dihydropterin diphosphate. This Streptococcus pneumoniae serotype 4 (strain ATCC BAA-334 / TIGR4) protein is Bifunctional folate synthesis protein.